A 210-amino-acid chain; its full sequence is Ras-related protein RABC2a (210 aa).

20-27 is a binding site for GTP; the sequence is GDSGVGKS. The Effector region motif lies at 41–49; it reads LAPTIGVDF. GTP is bound by residues 67 to 71, 127 to 130, and 157 to 158; these read DTAGQ, NKVD, and SA. 2 S-geranylgeranyl cysteine lipidation sites follow: cysteine 208 and cysteine 209.

Belongs to the small GTPase superfamily. Rab family. As to quaternary structure, interacts with XI-2/MYA2.

It localises to the cell membrane. Its subcellular location is the cytoplasm. Its function is as follows. Intracellular vesicle trafficking and protein transport. This Arabidopsis thaliana (Mouse-ear cress) protein is Ras-related protein RABC2a (RABC2A).